A 46-amino-acid chain; its full sequence is Crambin (46 aa).

Disulfide bonds link C3–C40, C4–C32, and C16–C26.

It belongs to the plant thionin (TC 1.C.44) family.

The protein resides in the secreted. Its function is as follows. The function of this hydrophobic plant seed protein is not known. The chain is Crambin (THI2) from Crambe hispanica subsp. abyssinica (Abyssinian kale).